Reading from the N-terminus, the 906-residue chain is NACHT, LRR and PYD domains-containing protein 1b allele 4 (906 aa).

The disordered stretch occupies residues 1–22 (MEESPPKQKSNTKVAQHEGQQD). The NACHT domain maps to 126–435 (QLVIIEGAAG…EFFAAISCIL (310 aa)). 132–139 (GAAGIGKS) serves as a coordination point for ATP. LRR repeat units lie at residues 627–647 (NLEG…QSLC) and 684–704 (SLTE…RMLC). Residues 789–906 (FWGPTGPVAT…FQEHGSRNAR (118 aa)) form the FIIND (incomplete) domain.

This sequence belongs to the NLRP family. In terms of tissue distribution, expressed in macrophages.

It localises to the cytoplasm. Its subcellular location is the cytosol. Functionally, probable inactive allele of Nlrp1b, which lacks a CARD domain, suggesting that it is not able to form an inflammasome. Contrary to Nlrp1b allele 1, allele 4 is not activated by B.anthracis lethal toxin and no other activation signal is reported. The protein is NACHT, LRR and PYD domains-containing protein 1b allele 4 of Mus musculus (Mouse).